The chain runs to 359 residues: Epoxide hydrolase 4 (359 aa).

Residues 15-35 (ALLYWSLVYGYCGLCASVHLL) form a helical; Signal-anchor for type II membrane protein membrane-spanning segment. Positions 92 to 337 (PLMLLLHGFP…ILSEGSHWLQ (246 aa)) constitute an AB hydrolase-1 domain. Asp-167 (nucleophile) is an active-site residue. The active-site Proton donor is the Tyr-279. The active-site Proton acceptor is His-334.

It belongs to the AB hydrolase superfamily. Epoxide hydrolase family.

The protein localises to the membrane. This Mus musculus (Mouse) protein is Epoxide hydrolase 4 (Ephx4).